We begin with the raw amino-acid sequence, 527 residues long: Sulfate adenylyltransferase (527 aa).

Residues 1–176 form an N-terminal region; it reads MPIPTPHGGK…LQGINYPKHY (176 aa). The segment at 177-406 is catalytic; it reads DYVDARKTPT…LRETNPPRSK (230 aa). Residue Gln206 coordinates sulfate. Residues 206–209 and 302–305 contribute to the ATP site; these read QTRN and GRDH. Residues Thr207, Arg208, and Asn209 contribute to the active site. Sulfate is bound at residue Arg208. Ala306 lines the sulfate pocket. An ATP-binding site is contributed by Val344. The segment at 407 to 527 is required for oligomerization; adenylyl-sulfate kinase-like; it reads QGFAILIDNS…VNYLKDQGFY (121 aa).

The protein belongs to the sulfate adenylyltransferase family. In terms of assembly, homohexamer. Dimer of trimers.

It is found in the cytoplasm. It catalyses the reaction sulfate + ATP + H(+) = adenosine 5'-phosphosulfate + diphosphate. It participates in sulfur metabolism; hydrogen sulfide biosynthesis; sulfite from sulfate: step 1/3. Its function is as follows. Catalyzes the first intracellular reaction of sulfate assimilation, forming adenosine-5'-phosphosulfate (APS) from inorganic sulfate and ATP. Plays an important role in sulfate activation as a component of the biosynthesis pathway of sulfur-containing amino acids. The sequence is that of Sulfate adenylyltransferase from Candida albicans (strain SC5314 / ATCC MYA-2876) (Yeast).